The following is a 417-amino-acid chain: MLEQMGIAAKQASYKLAQLSSREKNRVLEKIADELEAQSEIILNANAQDVADARANGLSEAMLDRLALTPARLKGIADDVRQVCNLADPVGQVIDGGVLDSGLRLERRRVPLGVIGVIYEARPNVTVDVASLCLKTGNAVILRGGKETCRTNAATVAVIQDALKSCDLPAGAVQAIDNPDRALVSEMLRMDKYIDMLIPRGGAGLHKLCREQSTIPVITGGIGVCHIYVDESAEIAEALKVIVNAKTQRPSTCNTVETLLVNKNIADSFLPALSKQMAESGVTLHADAAALAQLQAGPAKVVAVKAEEYDDEFLSLDLNVKIVSDLDDAIAHIREHGTQHSDAILTRDMRNAQRFVNEVDSSAVYVNASTRFTDGGQFGLGAEVAVSTQKLHARGPMGLEALTTYKWIGIGDYTIRA.

This sequence belongs to the gamma-glutamyl phosphate reductase family.

The protein resides in the cytoplasm. The catalysed reaction is L-glutamate 5-semialdehyde + phosphate + NADP(+) = L-glutamyl 5-phosphate + NADPH + H(+). The protein operates within amino-acid biosynthesis; L-proline biosynthesis; L-glutamate 5-semialdehyde from L-glutamate: step 2/2. Catalyzes the NADPH-dependent reduction of L-glutamate 5-phosphate into L-glutamate 5-semialdehyde and phosphate. The product spontaneously undergoes cyclization to form 1-pyrroline-5-carboxylate. This Escherichia coli (strain SMS-3-5 / SECEC) protein is Gamma-glutamyl phosphate reductase.